The sequence spans 177 residues: Large ribosomal subunit protein uL6 (177 aa).

This sequence belongs to the universal ribosomal protein uL6 family. As to quaternary structure, part of the 50S ribosomal subunit.

Functionally, this protein binds to the 23S rRNA, and is important in its secondary structure. It is located near the subunit interface in the base of the L7/L12 stalk, and near the tRNA binding site of the peptidyltransferase center. This is Large ribosomal subunit protein uL6 from Bordetella petrii (strain ATCC BAA-461 / DSM 12804 / CCUG 43448).